Here is a 262-residue protein sequence, read N- to C-terminus: Serine/arginine-rich SC35-like splicing factor SCL30A (262 aa).

Disordered regions lie at residues 1–38 (MRGR…LPTS) and 115–262 (ENRK…SPSQ). A phosphoserine mark is found at serine 9 and serine 20. An RRM domain is found at 37-115 (TSLLVRNLRH…RELTVVFAEE (79 aa)). The span at 115–140 (ENRKKPTEMRTRDRGGRSNRFQDRRR) shows a compositional bias: basic and acidic residues. The segment covering 150–161 (PPRRGRRSRSRS) has biased composition (basic residues). 4 positions are modified to phosphoserine: serine 166, serine 174, serine 176, and serine 178. The span at 180-190 (QDRRYEKERSY) shows a compositional bias: basic and acidic residues. Phosphoserine occurs at positions 191 and 193. A compositionally biased stretch (basic residues) spans 209–226 (VKSHSRSPRRSVSPRKNR). A compositionally biased stretch (low complexity) spans 234 to 246 (RSQSPVPRQSRSP). Serine 235, serine 259, and serine 261 each carry phosphoserine.

This sequence belongs to the splicing factor SR family. SCL subfamily. In terms of assembly, component of the spliceosome. Interacts with SNRNP35, CYP59 and RS2Z33.

The protein localises to the nucleus speckle. In terms of biological role, involved in intron recognition and spliceosome assembly. Binds probably to multiple 5'-GAAG-3' repeats found in its third intron, suggesting autoregulation of alternative splicing. May be necessary for accurate splicing of the 3' region of introns. This is Serine/arginine-rich SC35-like splicing factor SCL30A (SCL30A) from Arabidopsis thaliana (Mouse-ear cress).